The chain runs to 518 residues: Dihydropyrimidinase 2 (518 aa).

Zn(2+) contacts are provided by His59, His61, and Lys152. Lys152 is subject to N6-carboxylysine. Residue Tyr157 participates in substrate binding. Positions 185 and 241 each coordinate Zn(2+). Residue Ser291 coordinates substrate. Asp319 contacts Zn(2+). A substrate-binding site is contributed by Asn340.

It belongs to the metallo-dependent hydrolases superfamily. Hydantoinase/dihydropyrimidinase family. As to quaternary structure, homotetramer. Requires Zn(2+) as cofactor. Carboxylation allows a single lysine to coordinate two zinc ions.

It catalyses the reaction 5,6-dihydrouracil + H2O = 3-(carbamoylamino)propanoate + H(+). This Caenorhabditis briggsae protein is Dihydropyrimidinase 2 (dhp-2).